Reading from the N-terminus, the 166-residue chain is Probable DHNTP pyrophosphohydrolase (166 aa).

Positions 42-166 (DLQLSASALV…FKKYYRYKNI (125 aa)) constitute a Nudix hydrolase domain. The Nudix box motif lies at 73-94 (GHVELKESPLDTAIREFHEETG). Residues Glu88 and Glu92 each coordinate Mg(2+).

This sequence belongs to the Nudix hydrolase family. In terms of assembly, monomer. The cofactor is Mg(2+).

Its pathway is cofactor biosynthesis; tetrahydrofolate biosynthesis; 2-amino-4-hydroxy-6-hydroxymethyl-7,8-dihydropteridine diphosphate from 7,8-dihydroneopterin triphosphate: step 1/4. Probably mediates the removal of pyrophosphate from dihydroneopterin triphosphate (DHNTP), a possible step in the pterin branch of the folate synthesis pathway. The chain is Probable DHNTP pyrophosphohydrolase (folQ) from Lactococcus lactis subsp. cremoris (strain MG1363).